Consider the following 132-residue polypeptide: UPF0102 protein Acel_1550 (132 aa).

Belongs to the UPF0102 family.

The protein is UPF0102 protein Acel_1550 of Acidothermus cellulolyticus (strain ATCC 43068 / DSM 8971 / 11B).